Here is a 151-residue protein sequence, read N- to C-terminus: Large ribosomal subunit protein uL15 (151 aa).

A disordered region spans residues 1 to 60; the sequence is MAENSPLKAHNLRPAPGAKTAKTRVGRGEASKGKTAGRGTKGTKARYQVPERFEGGQMPL.

Belongs to the universal ribosomal protein uL15 family. Part of the 50S ribosomal subunit.

Binds to the 23S rRNA. The chain is Large ribosomal subunit protein uL15 from Streptomyces griseus subsp. griseus (strain JCM 4626 / CBS 651.72 / NBRC 13350 / KCC S-0626 / ISP 5235).